We begin with the raw amino-acid sequence, 84 residues long: RNA-binding protein Hfq (84 aa).

A Sm domain is found at 11-71; it reads DVFLNFIRKN…ISTVMPSTPI (61 aa).

Belongs to the Hfq family. Homohexamer.

In terms of biological role, RNA chaperone that binds small regulatory RNA (sRNAs) and mRNAs to facilitate mRNA translational regulation in response to envelope stress, environmental stress and changes in metabolite concentrations. Also binds with high specificity to tRNAs. The polypeptide is RNA-binding protein Hfq (Paramagnetospirillum magneticum (strain ATCC 700264 / AMB-1) (Magnetospirillum magneticum)).